Here is a 166-residue protein sequence, read N- to C-terminus: Orofacial cleft 1 candidate gene 1 protein homolog (166 aa).

The tract at residues 1–22 is disordered; that stretch reads MDKEKFQQKAVKQTKQKKSTSA.

This is Orofacial cleft 1 candidate gene 1 protein homolog (Ofcc1) from Mus musculus (Mouse).